We begin with the raw amino-acid sequence, 493 residues long: Phospholipid transfer protein (493 aa).

Residues 1–17 (MVLLWALFLALLAGAHA) form the signal peptide. Asn64, Asn91, Asn94, Asn117, and Asn143 each carry an N-linked (GlcNAc...) asparagine glycan. Cys146 and Cys185 are oxidised to a cystine. Asn245 and Asn398 each carry an N-linked (GlcNAc...) asparagine glycan.

The protein belongs to the BPI/LBP/Plunc superfamily. BPI/LBP family. Glycosylation is necessary for secretion and its phospholipid transfer activity. In terms of tissue distribution, highest level expression in the lung, brain and heart with relatively low levels in the liver, skeletal muscle and testis and very low levels found in the spleen and kidney.

It is found in the secreted. The protein localises to the nucleus. It carries out the reaction a 1,2-diacyl-sn-glycero-3-phosphocholine(in) = a 1,2-diacyl-sn-glycero-3-phosphocholine(out). It catalyses the reaction a 1,2-diacyl-sn-glycero-3-phosphoethanolamine(in) = a 1,2-diacyl-sn-glycero-3-phosphoethanolamine(out). The catalysed reaction is a 1,2-diacyl-sn-glycerol(in) = a 1,2-diacyl-sn-glycerol(out). The enzyme catalyses a 1,2-diacyl-sn-glycero-3-phosphate(in) = a 1,2-diacyl-sn-glycero-3-phosphate(out). It carries out the reaction a sphingomyelin(in) = a sphingomyelin(out). It catalyses the reaction a 1,2-diacyl-sn-glycero-3-phospho-(1'-sn-glycerol)(in) = a 1,2-diacyl-sn-glycero-3-phospho-(1'-sn-glycerol)(out). The catalysed reaction is a 1,2-diacyl-sn-glycero-3-phospho-(1D-myo-inositol)(in) = a 1,2-diacyl-sn-glycero-3-phospho-(1D-myo-inositol)(out). The enzyme catalyses 1-hexadecanoyl-2-(5Z,8Z,11Z,14Z-eicosatetraenoyl)-sn-glycero-3-phosphoethanolamine(in) = 1-hexadecanoyl-2-(5Z,8Z,11Z,14Z-eicosatetraenoyl)-sn-glycero-3-phosphoethanolamine(out). It carries out the reaction N-(hexadecanoyl)-sphing-4-enine-1-phosphocholine(in) = N-(hexadecanoyl)-sphing-4-enine-1-phosphocholine(out). It catalyses the reaction 1,2-dihexadecanoyl-sn-glycero-3-phosphocholine(in) = 1,2-dihexadecanoyl-sn-glycero-3-phosphocholine(out). Mediates the transfer of phospholipids and free cholesterol from triglyceride-rich lipoproteins (low density lipoproteins or LDL and very low density lipoproteins or VLDL) into high-density lipoproteins (HDL) as well as the exchange of phospholipids between triglyceride-rich lipoproteins themselves. Facilitates the transfer of a spectrum of different lipid molecules, including sphingomyelin, phosphatidylcholine, phosphatidylinositol, phosphatidylglycerol, and phosphatidyl ethanolamine. Plays an important role in HDL remodeling which involves modulating the size and composition of HDL. Also plays a key role in the uptake of cholesterol from peripheral cells and tissues that is subsequently transported to the liver for degradation and excretion. Two distinct forms of PLTP exist in plasma: an active form that can transfer phosphatidylcholine from phospholipid vesicles to HDL, and an inactive form that lacks this capability. This chain is Phospholipid transfer protein (Pltp), found in Mus musculus (Mouse).